A 309-amino-acid chain; its full sequence is Metal ABC transporter substrate-binding lipoprotein SsaB (309 aa).

Positions 1–19 are cleaved as a signal peptide; that stretch reads MKKLGFLSLLLLAVCTLFA. Cys-20 carries the N-palmitoyl cysteine lipid modification. Residue Cys-20 is the site of S-diacylglycerol cysteine attachment. His-67, His-139, Glu-205, and Asp-280 together coordinate a divalent metal cation.

Belongs to the bacterial solute-binding protein 9 family. Lipoprotein receptor antigen (Lrai) subfamily. As to quaternary structure, homodimer and homotrimer.

Its subcellular location is the cell membrane. In terms of biological role, part of an ATP-binding cassette (ABC) transport system involved in metal import. Binds a metal with high affinity and specificity and delivers it to the membrane permease for translocation into the cytoplasm. Also acts as an adhesin which is involved on adherence to extracellular matrix. It is an important factor in the pathogenesis and infection. May contribute to the formation and accumulation of dental plaque. This Streptococcus sanguinis protein is Metal ABC transporter substrate-binding lipoprotein SsaB (ssaB).